Consider the following 323-residue polypeptide: Protoheme IX farnesyltransferase (323 aa).

9 helical membrane passes run 28–48 (IIPLLLITTAAAMWIASNGQV), 50–70 (PVLLLVTLLGGTLAAASAQTL), 99–119 (HALIFAIILAVLSFTLFVVFV), 122–142 (ASALLAMSGIAFYMLIYTHML), 150–170 (IVIGGAAGSIPPLVGWAAVTG), 178–198 (ALFAIIFLWTPPHFWALALMI), 223–243 (IWIYTLIVVPFTFILVYPLAA), 244–264 (SGIVYTLVALVLGGMFIYKTW), and 279–299 (LFKYSILYMMLLCTGMVVDSL).

It belongs to the UbiA prenyltransferase family. Protoheme IX farnesyltransferase subfamily.

The protein resides in the cell inner membrane. The enzyme catalyses heme b + (2E,6E)-farnesyl diphosphate + H2O = Fe(II)-heme o + diphosphate. It participates in porphyrin-containing compound metabolism; heme O biosynthesis; heme O from protoheme: step 1/1. Functionally, converts heme B (protoheme IX) to heme O by substitution of the vinyl group on carbon 2 of heme B porphyrin ring with a hydroxyethyl farnesyl side group. In Gloeothece citriformis (strain PCC 7424) (Cyanothece sp. (strain PCC 7424)), this protein is Protoheme IX farnesyltransferase.